Here is a 299-residue protein sequence, read N- to C-terminus: Aspartate carbamoyltransferase catalytic subunit (299 aa).

Residues Arg-51 and Thr-52 each coordinate carbamoyl phosphate. Residue Lys-80 participates in L-aspartate binding. Carbamoyl phosphate is bound by residues Arg-101, His-129, and Gln-132. 2 residues coordinate L-aspartate: Arg-162 and Arg-221. Carbamoyl phosphate contacts are provided by Leu-260 and Pro-261.

Belongs to the aspartate/ornithine carbamoyltransferase superfamily. ATCase family. Heterooligomer of catalytic and regulatory chains.

It catalyses the reaction carbamoyl phosphate + L-aspartate = N-carbamoyl-L-aspartate + phosphate + H(+). The protein operates within pyrimidine metabolism; UMP biosynthesis via de novo pathway; (S)-dihydroorotate from bicarbonate: step 2/3. Its function is as follows. Catalyzes the condensation of carbamoyl phosphate and aspartate to form carbamoyl aspartate and inorganic phosphate, the committed step in the de novo pyrimidine nucleotide biosynthesis pathway. This chain is Aspartate carbamoyltransferase catalytic subunit, found in Sulfolobus acidocaldarius (strain ATCC 33909 / DSM 639 / JCM 8929 / NBRC 15157 / NCIMB 11770).